Consider the following 368-residue polypeptide: MDPDRQADIAALDTTLTTVERVLDVDGLRNRIEQLEKDASDPNLWDDQTRAQKVTSDLSHAQNELRRVEGLRQRLDDLPVLYELAAEAGGPDEVAEADAELAKLREDIEAMEVRTLLSGEYDEREAVVTIRSGAGGVDAADWAEMLMRMYIRWAEKHDYPVEIFDTSYAEEAGIKSATFAVHAPFAYGTLSVEQGTHRLVRISPFDNQSRRQTSFADVEVLPVVETTDHIEIPENDIRVDVYRSSGPGGQSVNTTDSAVRLTHIPTGIVVTCQNEKSQLQNKVSAMRVLQAKLLERKRLEERAELDALKGDGGSSWGNQMRSYVLHPYQMVKDLRTEYEVGNPASVLDGDIDGFLEAGIRWRNRKDDD.

N5-methylglutamine is present on Q250.

This sequence belongs to the prokaryotic/mitochondrial release factor family. Post-translationally, methylated by PrmC. Methylation increases the termination efficiency of RF2.

The protein localises to the cytoplasm. In terms of biological role, peptide chain release factor 2 directs the termination of translation in response to the peptide chain termination codons UGA and UAA. This is Peptide chain release factor 2 from Mycolicibacterium smegmatis (strain ATCC 700084 / mc(2)155) (Mycobacterium smegmatis).